A 208-amino-acid polypeptide reads, in one-letter code: Outer-membrane lipoprotein carrier protein (208 aa).

The first 22 residues, 1 to 22, serve as a signal peptide directing secretion; sequence MKNLLCAVMLTSPLLYSTAVFA.

The protein belongs to the LolA family. Monomer.

The protein resides in the periplasm. In terms of biological role, participates in the translocation of lipoproteins from the inner membrane to the outer membrane. Only forms a complex with a lipoprotein if the residue after the N-terminal Cys is not an aspartate (The Asp acts as a targeting signal to indicate that the lipoprotein should stay in the inner membrane). In Shewanella putrefaciens (strain CN-32 / ATCC BAA-453), this protein is Outer-membrane lipoprotein carrier protein.